We begin with the raw amino-acid sequence, 29 residues long: Cytochrome b6-f complex subunit 8 (29 aa).

Residues 3–23 traverse the membrane as a helical segment; sequence ITSIAWGALMVVFTFSLSLVV.

It belongs to the PetN family. As to quaternary structure, the 4 large subunits of the cytochrome b6-f complex are cytochrome b6, subunit IV (17 kDa polypeptide, PetD), cytochrome f and the Rieske protein, while the 4 small subunits are PetG, PetL, PetM and PetN. The complex functions as a dimer.

It is found in the plastid membrane. Component of the cytochrome b6-f complex, which mediates electron transfer between photosystem II (PSII) and photosystem I (PSI), cyclic electron flow around PSI, and state transitions. The protein is Cytochrome b6-f complex subunit 8 of Aneura mirabilis (Parasitic liverwort).